We begin with the raw amino-acid sequence, 284 residues long: Probable palmitoyltransferase ZDHHC24 (284 aa).

Residues 1–18 lie on the Cytoplasmic side of the membrane; the sequence is MGESWAARGAEGAPARMP. Residues 19 to 39 form a helical membrane-spanning segment; sequence LVLTALWAAVVVLELAYVMVL. The Extracellular segment spans residues 40-52; it reads GPGPPPLGPLARA. The chain crosses the membrane as a helical span at residues 53–73; sequence LQLALAAYQLLNLLGNVVLFL. The Cytoplasmic segment spans residues 74–137; sequence RSDPSIRGVM…GCCVGFHNYR (64 aa). The region spanning 94-144 is the DHHC domain; that stretch reads AYCYQCQSQVPPRSGHCSACRVCILRRDHHCRLLGCCVGFHNYRPFLCLLL. Cys-124 (S-palmitoyl cysteine intermediate) is an active-site residue. The chain crosses the membrane as a helical span at residues 138 to 158; sequence PFLCLLLHSAGVLLHISVLLG. At 159–166 the chain is on the extracellular side; sequence PALSALLQ. The chain crosses the membrane as a helical span at residues 167 to 187; that stretch reads AHSALYTVALLLLPWLMLLTG. Residues 188–195 lie on the Cytoplasmic side of the membrane; sequence KVSLAQFA. The chain crosses the membrane as a helical span at residues 196–216; the sequence is LAFVVDTCVAGALLCGAGLLF. Residues 217–284 are Extracellular-facing; the sequence is HGMLLLRGQT…TPGDVGLVTS (68 aa).

Belongs to the DHHC palmitoyltransferase family.

The protein resides in the membrane. The enzyme catalyses L-cysteinyl-[protein] + hexadecanoyl-CoA = S-hexadecanoyl-L-cysteinyl-[protein] + CoA. Probable palmitoyltransferase that could catalyze the addition of palmitate onto various protein substrates. In Mus musculus (Mouse), this protein is Probable palmitoyltransferase ZDHHC24.